Consider the following 137-residue polypeptide: ATP synthase epsilon chain, chloroplastic (137 aa).

The protein belongs to the ATPase epsilon chain family. As to quaternary structure, F-type ATPases have 2 components, CF(1) - the catalytic core - and CF(0) - the membrane proton channel. CF(1) has five subunits: alpha(3), beta(3), gamma(1), delta(1), epsilon(1). CF(0) has three main subunits: a, b and c.

The protein resides in the plastid. Its subcellular location is the chloroplast thylakoid membrane. Produces ATP from ADP in the presence of a proton gradient across the membrane. This Medicago sativa (Alfalfa) protein is ATP synthase epsilon chain, chloroplastic.